We begin with the raw amino-acid sequence, 188 residues long: Inner membrane-spanning protein YciB (188 aa).

5 helical membrane-spanning segments follow: residues Phe-23–Ala-43, Ala-49–Phe-69, Val-73–Gly-93, Trp-116–Ile-133, and Phe-149–Met-169.

The protein belongs to the YciB family.

The protein resides in the cell inner membrane. Its function is as follows. Plays a role in cell envelope biogenesis, maintenance of cell envelope integrity and membrane homeostasis. This is Inner membrane-spanning protein YciB from Caulobacter vibrioides (strain ATCC 19089 / CIP 103742 / CB 15) (Caulobacter crescentus).